Consider the following 1806-residue polypeptide: Non-reducing polyketide synthase pks12 (1806 aa).

Residues 30 to 191 enclose the Starter acyltransferase (SAT) domain; the sequence is TDTMSGMISL…TKLHLRGKVH (162 aa). Residues 330-755 form the Ketosynthase family 3 (KS3) domain; it reads ENAIAIVGAG…GSNSALICGE (426 aa). Active-site for beta-ketoacyl synthase activity residues include C504, H639, and H678. The tract at residues 860 to 1156 is malonyl-CoA:ACP transacylase (MAT) domain; sequence LAFSGQSKQT…HNPSQHTFLG (297 aa). Residues 862 to 1147 form the Malonyl-CoA:ACP transacylase (MAT) domain; the sequence is FSGQSKQTIG…IIPMVKRATH (286 aa). S947 serves as the catalytic For acyl/malonyl transferase activity. The segment at 1249 to 1383 is N-terminal hotdog fold; it reads PQTPPLKLVT…GRFSVTSHID (135 aa). The PKS/mFAS DH domain occupies 1249–1558; sequence PQTPPLKLVT…FSRFPIAKLE (310 aa). The tract at residues 1249–1558 is product template (PT) domain; the sequence is PQTPPLKLVT…FSRFPIAKLE (310 aa). H1288 serves as the catalytic Proton acceptor; for dehydratase activity. Residues 1404 to 1558 form a C-terminal hotdog fold region; that stretch reads SERLMAGRAY…FSRFPIAKLE (155 aa). D1468 (proton donor; for dehydratase activity) is an active-site residue. Positions 1727-1804 constitute a Carrier domain; sequence QSKLRIRQRI…ELVDYVVISS (78 aa). S1764 is modified (O-(pantetheine 4'-phosphoryl)serine).

Pantetheine 4'-phosphate serves as cofactor.

It functions in the pathway secondary metabolite biosynthesis. Its function is as follows. Non-reducing polyketide synthase; part of the gene cluster that mediates the biosynthesis of mitorubrinol and mitorubrinic acid, two virulence factors that improve T.marneffei intracellular survival in macrophages. The two polyketide synthases pks12 and pks11 are probably responsible for sequential use in the biosynthesis of mitorubrinol and mitorubrinic acid. The first part of the biosynthesis is probably catalyzed by pks12, which synthesized orsellinic acid. This tetraketide is then used as a starter unit for pks11, which possesses a SAT domain, in the second part of the biosynthesis. Pks11, contains a methyltransferase domain, also served that methylates the products, using a methyl group from S-adenosylmethionine. The chain is Non-reducing polyketide synthase pks12 from Talaromyces marneffei (Penicillium marneffei).